Consider the following 622-residue polypeptide: Chaperone protein DnaK (622 aa).

T197 carries the post-translational modification Phosphothreonine; by autocatalysis. Composition is skewed to basic and acidic residues over residues 515–528 (LHKE…EAVE) and 575–614 (ASKE…KKDD). Disordered regions lie at residues 515–537 (LHKE…DSLV) and 575–622 (ASKE…AEVE).

Belongs to the heat shock protein 70 family.

In terms of biological role, acts as a chaperone. The sequence is that of Chaperone protein DnaK from Campylobacter lari (strain RM2100 / D67 / ATCC BAA-1060).